Here is an 892-residue protein sequence, read N- to C-terminus: Translation initiation factor IF-2 (892 aa).

Basic and acidic residues predominate over residues Glu165–Thr175. Disordered stretches follow at residues Glu165–Ser250 and Glu264–Phe300. Residues Pro208 to Ser222 are compositionally biased toward low complexity. In terms of domain architecture, tr-type G spans Pro391–Lys560. GTP is bound by residues Gly400 to Thr407, Asp446 to His450, and Ser500 to Asp503.

This sequence belongs to the TRAFAC class translation factor GTPase superfamily. Classic translation factor GTPase family. IF-2 subfamily.

The protein localises to the cytoplasm. One of the essential components for the initiation of protein synthesis. Protects formylmethionyl-tRNA from spontaneous hydrolysis and promotes its binding to the 30S ribosomal subunits. Also involved in the hydrolysis of GTP during the formation of the 70S ribosomal complex. The polypeptide is Translation initiation factor IF-2 (Xylella fastidiosa (strain 9a5c)).